We begin with the raw amino-acid sequence, 144 residues long: UPF0102 protein BURPS1106A_3900 (144 aa).

Residues 1-28 (MCHAREASPGTGEPEAAPRDNFPRAAGS) are disordered.

The protein belongs to the UPF0102 family.

The protein is UPF0102 protein BURPS1106A_3900 of Burkholderia pseudomallei (strain 1106a).